The primary structure comprises 220 residues: Protein US2 homolog (220 aa).

It belongs to the herpesviridae US2 family.

This chain is Protein US2 homolog, found in Bovine herpesvirus 1.2 (strain ST) (BoHV-1).